The sequence spans 180 residues: Translation initiation factor IF-3 (180 aa).

This sequence belongs to the IF-3 family. Monomer.

The protein localises to the cytoplasm. IF-3 binds to the 30S ribosomal subunit and shifts the equilibrium between 70S ribosomes and their 50S and 30S subunits in favor of the free subunits, thus enhancing the availability of 30S subunits on which protein synthesis initiation begins. The sequence is that of Translation initiation factor IF-3 from Escherichia coli (strain K12 / MC4100 / BW2952).